An 84-amino-acid chain; its full sequence is Large ribosomal subunit protein eL34 (84 aa).

The protein belongs to the eukaryotic ribosomal protein eL34 family.

The sequence is that of Large ribosomal subunit protein eL34 (ribL34e) from Pyrobaculum aerophilum (strain ATCC 51768 / DSM 7523 / JCM 9630 / CIP 104966 / NBRC 100827 / IM2).